We begin with the raw amino-acid sequence, 52 residues long: ERMES regulator 1 (52 aa).

Residues 1 to 27 (MIFFFNQIRSIFTALHTPTQQIQLSRR) are Mitochondrial intermembrane-facing. Residues 28–46 (AFFQFLGYLGSCVVISLAA) form a helical membrane-spanning segment. Residues 47 to 52 (QSKYVQ) are Cytoplasmic-facing.

Belongs to the EMR1 family.

The protein resides in the mitochondrion outer membrane. Functionally, mediates the formation of endoplasmic reticulum (ER)-mitochondria encounter structure (ERMES) foci, thereby contributing to the formation of ER-mitochondrial contact sites. This Saccharomyces cerevisiae (strain ATCC 204508 / S288c) (Baker's yeast) protein is ERMES regulator 1.